A 169-amino-acid chain; its full sequence is Phosphopantetheine adenylyltransferase (169 aa).

Substrate is bound at residue Ser8. Residues 8 to 9 (SF) and His16 each bind ATP. Positions 40, 72, and 86 each coordinate substrate. ATP-binding positions include 87-89 (GLR), Glu97, and 122-128 (YSFLSSS).

Belongs to the bacterial CoaD family. Homohexamer. Mg(2+) is required as a cofactor.

The protein resides in the cytoplasm. It carries out the reaction (R)-4'-phosphopantetheine + ATP + H(+) = 3'-dephospho-CoA + diphosphate. It functions in the pathway cofactor biosynthesis; coenzyme A biosynthesis; CoA from (R)-pantothenate: step 4/5. In terms of biological role, reversibly transfers an adenylyl group from ATP to 4'-phosphopantetheine, yielding dephospho-CoA (dPCoA) and pyrophosphate. The polypeptide is Phosphopantetheine adenylyltransferase (Cyanothece sp. (strain PCC 7425 / ATCC 29141)).